The following is a 585-amino-acid chain: Mitochondrial sodium/calcium exchanger protein (585 aa).

The first 26 residues, 1–26, serve as a signal peptide directing secretion; it reads MASRWLALLWAPVFLCVALILETASG. The Extracellular segment spans residues 27–95; it reads TGDPSTKAHG…GIFCYFPPNL (69 aa). A glycan (N-linked (GlcNAc...) asparagine) is linked at Asn-46. The chain crosses the membrane as a helical span at residues 96–116; the sequence is LPLAITLYVFWLLYLFLILGV. Residues 117–140 lie on the Cytoplasmic side of the membrane; it reads TAAKFFCPNLSAISTNLKLSHNVA. A helical membrane pass occupies residues 141–161; sequence GVTFLAFGNGAPDIFSALVAF. Residues 162–168 are Extracellular-facing; that stretch reads SDPRTAG. Residues 169-189 form a helical membrane-spanning segment; the sequence is LAIGALFGAGVLVTTVVAGGI. At 190–205 the chain is on the cytoplasmic side; sequence TILHPFMAASRPFLRD. The helical transmembrane segment at 206 to 226 threads the bilayer; that stretch reads IAFYMVAVFLTFTALYLGRIT. Residues 227 to 229 are Extracellular-facing; sequence LTW. Residues 230–250 form a helical membrane-spanning segment; that stretch reads ALGYLGLYVFYVVTVIICTWV. The Cytoplasmic segment spans residues 251 to 325; that stretch reads YQRQRSRSLV…KWRTQSISWR (75 aa). The residue at position 258 (Ser-258) is a Phosphoserine; by PKA. The chain crosses the membrane as a helical span at residues 326–346; the sequence is VLKVVKLPVEFLLLLTVPVVD. Residues 347-360 are Extracellular-facing; the sequence is PDKDDRNWKRPLNC. The helical transmembrane segment at 361–381 threads the bilayer; sequence LQLVISPLVLVLTLQSGVYGI. The Cytoplasmic segment spans residues 382 to 383; the sequence is YE. Residues 384–404 form a helical membrane-spanning segment; sequence IGGLLPVWAVVVIVGTALASV. Over 405 to 416 the chain is Extracellular; it reads TFFATSNREPPR. Residues 417 to 437 traverse the membrane as a helical segment; sequence LHWLFAFLGFLTSALWINAAA. Topologically, residues 438 to 445 are cytoplasmic; the sequence is TEVVNILR. A helical transmembrane segment spans residues 446–466; the sequence is SLGVIFRLSNTVLGLTLLAWG. Residues 467-491 lie on the Extracellular side of the membrane; it reads NSIGDAFSDFTLARQGYPRMAFSAC. The chain crosses the membrane as a helical span at residues 492-512; sequence FGGIIFNILVGVGLGCLLQII. The Cytoplasmic portion of the chain corresponds to 513-525; it reads RNHVVEVKLEPDG. A helical transmembrane segment spans residues 526–546; the sequence is LLVWVLASALGLSLIFSLVSV. Residues 547–559 lie on the Extracellular side of the membrane; sequence PLQCFQLSKAYGL. Residues 560–580 form a helical membrane-spanning segment; the sequence is CLLLFYICFLVVVLLTEFGVI. Residues 581–585 are Cytoplasmic-facing; sequence HLKKA.

It belongs to the Ca(2+):cation antiporter (CaCA) (TC 2.A.19) family. SLC24A subfamily. In terms of processing, phosphorylation at Ser-258 by PKA prevents calcium overload. In terms of tissue distribution, ubiquitously expressed. Expressed in dental tissues.

The protein localises to the mitochondrion inner membrane. The protein resides in the cell membrane. It carries out the reaction Ca(2+)(in) + 3 Na(+)(out) = Ca(2+)(out) + 3 Na(+)(in). It catalyses the reaction 3 Li(+)(out) + Ca(2+)(in) = 3 Li(+)(in) + Ca(2+)(out). Its activity is regulated as follows. Inhibited by the sodium/calcium exchanger inhibitor CGP-37157. Strongly inhibited by zinc. Functionally, mitochondrial sodium/calcium antiporter that mediates sodium-dependent calcium efflux from mitochondrion, by mediating the exchange of 3 sodium ions per 1 calcium ion. Plays a central role in mitochondrial calcium homeostasis by mediating mitochondrial calcium extrusion: calcium efflux is essential for mitochondrial function and cell survival, notably in cardiomyocytes. Regulates rates of glucose-dependent insulin secretion in pancreatic beta-cells during the first phase of insulin secretion: acts by mediating efflux of calcium from mitochondrion, thereby affecting cytoplasmic calcium responses. Required for store-operated Ca(2+) entry (SOCE) and Ca(2+) release-activated Ca(2+) (CRAC) channel regulation: sodium transport by SLC8B1 leads to promote calcium-shuttling that modulates mitochondrial redox status, thereby regulating SOCE activity. Involved in B-lymphocyte chemotaxis. Able to transport Ca(2+) in exchange of either Li(+) or Na(+), explaining how Li(+) catalyzes Ca(2+) exchange. In contrast to other members of the family its function is independent of K(+). This is Mitochondrial sodium/calcium exchanger protein from Mus musculus (Mouse).